The chain runs to 336 residues: Dihydroorotate dehydrogenase (quinone) (336 aa).

FMN-binding positions include 62–66 (AGLDK) and T86. Residue K66 participates in substrate binding. Residue 111 to 115 (NRMGF) coordinates substrate. Residues N139 and N172 each contribute to the FMN site. N172 serves as a coordination point for substrate. Residue S175 is the Nucleophile of the active site. A substrate-binding site is contributed by N177. The FMN site is built by K217 and T245. A substrate-binding site is contributed by 246–247 (NT). FMN contacts are provided by residues G268, G297, and 318 to 319 (YS).

It belongs to the dihydroorotate dehydrogenase family. Type 2 subfamily. Monomer. Requires FMN as cofactor.

Its subcellular location is the cell membrane. It carries out the reaction (S)-dihydroorotate + a quinone = orotate + a quinol. Its pathway is pyrimidine metabolism; UMP biosynthesis via de novo pathway; orotate from (S)-dihydroorotate (quinone route): step 1/1. Functionally, catalyzes the conversion of dihydroorotate to orotate with quinone as electron acceptor. This is Dihydroorotate dehydrogenase (quinone) from Pectobacterium carotovorum subsp. carotovorum (strain PC1).